Consider the following 229-residue polypeptide: Phosphoglycolate phosphatase (229 aa).

Asp-18 acts as the Nucleophile in catalysis. Mg(2+)-binding residues include Asp-18, Asp-20, and Asp-176.

Belongs to the HAD-like hydrolase superfamily. CbbY/CbbZ/Gph/YieH family. Requires Mg(2+) as cofactor.

It catalyses the reaction 2-phosphoglycolate + H2O = glycolate + phosphate. It functions in the pathway organic acid metabolism; glycolate biosynthesis; glycolate from 2-phosphoglycolate: step 1/1. Functionally, specifically catalyzes the dephosphorylation of 2-phosphoglycolate. Is involved in the dissimilation of the intracellular 2-phosphoglycolate formed during the DNA repair of 3'-phosphoglycolate ends, a major class of DNA lesions induced by oxidative stress. The chain is Phosphoglycolate phosphatase from Xylella fastidiosa (strain 9a5c).